Here is a 757-residue protein sequence, read N- to C-terminus: Alcohol dehydrogenase (quinone), dehydrogenase subunit (757 aa).

Residues 1–34 form the signal peptide; the sequence is MTSGLLTPIKVTKKRLLSCAAALAFSAAVPVAFA. Position 35 is a pyrrolidone carboxylic acid (Q35). E95 provides a ligand contact to pyrroloquinoline quinone. Residues C141 and C142 are joined by a disulfide bond. R147 contributes to the pyrroloquinoline quinone binding site. E215 is a Ca(2+) binding site. T277 is a pyrroloquinoline quinone binding site. Ca(2+) contacts are provided by N297 and D342. Catalysis depends on D342, which acts as the Proton acceptor. Pyrroloquinoline quinone is bound by residues K369 and I588. Positions 640–719 constitute a Cytochrome c domain; that stretch reads ARQKDGYFMY…DIRNFIVKRA (80 aa). Heme c is bound by residues C653, C656, H657, and M696. Residues 726-757 form a disordered region; the sequence is EVKARENSTGVPNDQFLNVPQSTADVPTADHP. Polar residues predominate over residues 732 to 750; the sequence is NSTGVPNDQFLNVPQSTAD.

Belongs to the bacterial PQQ dehydrogenase family. In terms of assembly, the alcohol dehydrogenase multicomponent enzyme system is composed of a dehydrogenase subunit I (AdhA), a cytochrome c subunit II (AdhB) and a subunit III (AdhS). It depends on pyrroloquinoline quinone as a cofactor. Ca(2+) is required as a cofactor. Heme c serves as cofactor.

It localises to the cell membrane. It catalyses the reaction ethanol + a ubiquinone = a ubiquinol + acetaldehyde. With respect to regulation, 2,6-dichloro-4-dicyanovinylphenol (PC16) and antimycin A inhibit ubiquinol oxidation activity more selectively than the ubiquinone reductase activity. Functionally, dehydrogenase component of the alcohol dehydrogenase multicomponent enzyme system which is involved in the production of acetic acid and in the ethanol oxidase respiratory chain. Quinohemoprotein alcohol dehydrogenase (ADH) catalyzes the oxidation of ethanol to acetaldehyde by transferring electrons to the ubiquinone embedded in the membrane phospholipids. The electrons transfer from ethanol to membranous ubiquinone occurs from pyrroloquinoline quinone (PQQ) to one heme c in subunit I (AdhA), and finally to two heme c in subunit II (AdhB). Besides ubiquinone reduction, ADH also has a ubiquinol (QH2) oxidation reaction which mediates electron transfer from ubiquinol to the non-energy generating bypass oxidase system. The electrons transfer occurs from ubiquinol (QH2) to the additional heme c within subunit II (AdhB). Also able to use quinone analogs such as 2,3-dimethoxy-5-methyl-6-n-decyl-1,4-benzoquinone (DB) and 2,3-dimethoxy-5-methyl-6-n-pentyl-1,4-benzoquinone (PB). The protein is Alcohol dehydrogenase (quinone), dehydrogenase subunit of Gluconobacter oxydans (strain 621H) (Gluconobacter suboxydans).